A 74-amino-acid polypeptide reads, in one-letter code: Small ribosomal subunit protein eS17 (74 aa).

It belongs to the eukaryotic ribosomal protein eS17 family.

The sequence is that of Small ribosomal subunit protein eS17 from Aeropyrum pernix (strain ATCC 700893 / DSM 11879 / JCM 9820 / NBRC 100138 / K1).